Consider the following 382-residue polypeptide: MKKWMAAVFVMMLMLCFGGIENVKAAEPKVYQFDFGSGSMEPGYIGVRASDRYDRSKGYGFQTPENMRDVAASGAGVKSDAVQFLAYGTKSNNTFNVDLPNGLYEVKVTLGNTARASVAAEGVFQVINMTGDGAEDTFQIPVTDGQLNLLVTEGKAGTAFTLSALKIKKLSDQPVTNRTIYVGGDSTVCNYYPLNSSKQAGWGQMLPHYIDKHTFQVRNMASGGQIARGFRNDGQLEAILKYIKPGDYFMLQLGINDTNPKHKESEAEFKEVMRDMIRQVKAKGADVILSTPQGRATDFTSEGIHSSVNRWYRASILALAEEEKTYLIDLNVLSSAYFTSIGPERTLGLYMDGDTLHPNRAGADALARLAVQELKRQGIAGF.

A signal peptide spans 1-25 (MKKWMAAVFVMMLMLCFGGIENVKA). Catalysis depends on S186, which acts as the Nucleophile. Residues D354 and H357 contribute to the active site.

Belongs to the 'GDSL' lipolytic enzyme family.

This is an uncharacterized protein from Bacillus subtilis (strain 168).